Here is a 778-residue protein sequence, read N- to C-terminus: Dolichyl-phosphate-mannose--protein mannosyltransferase 4 (778 aa).

Over residues 1–28 (MASKSEKAVKKAQKLSKEPSVELTDTKS) the composition is skewed to basic and acidic residues. The disordered stretch occupies residues 1-44 (MASKSEKAVKKAQKLSKEPSVELTDTKSSDNVTPKQKSPNSTEE). Over residues 29–41 (SDNVTPKQKSPNS) the composition is skewed to polar residues. Asn40 carries an N-linked (GlcNAc...) asparagine glycan. The next 7 membrane-spanning stretches (helical) occupy residues 60-80 (LAFV…LNLP), 103-123 (FFDL…KLAG), 145-165 (VTIR…VFLI), 196-216 (ILLD…YVRF), 223-243 (PFSR…SCTI), 248-268 (VGFF…WYLW), and 288-308 (FCLI…HFNI). Asn335 is a glycosylation site (N-linked (GlcNAc...) asparagine). 3 consecutive MIR domains span residues 336–396 (STIL…ILPA), 408–467 (NVPV…VVMS), and 474–529 (RPLY…FDDI). Transmembrane regions (helical) follow at residues 608 to 628 (WWII…EILL), 644 to 664 (FYRS…PFFI), 669 to 689 (LFLH…GAFI), and 726 to 746 (VIEL…FTFF).

Belongs to the glycosyltransferase 39 family.

It is found in the endoplasmic reticulum membrane. It carries out the reaction a di-trans,poly-cis-dolichyl beta-D-mannosyl phosphate + L-seryl-[protein] = 3-O-(alpha-D-mannosyl)-L-seryl-[protein] + a di-trans,poly-cis-dolichyl phosphate + H(+). It catalyses the reaction a di-trans,poly-cis-dolichyl beta-D-mannosyl phosphate + L-threonyl-[protein] = 3-O-(alpha-D-mannosyl)-L-threonyl-[protein] + a di-trans,poly-cis-dolichyl phosphate + H(+). The protein operates within protein modification; protein glycosylation. Functionally, transfers mannose from Dol-P-mannose to Ser or Thr residues on proteins. Required for normal cell wall and septum formation. This is Dolichyl-phosphate-mannose--protein mannosyltransferase 4 (ogm4) from Schizosaccharomyces pombe (strain 972 / ATCC 24843) (Fission yeast).